Reading from the N-terminus, the 635-residue chain is 1-deoxy-D-xylulose-5-phosphate synthase (635 aa).

Thiamine diphosphate contacts are provided by residues histidine 79 and 120-122; that span reads GHS. Position 151 (aspartate 151) interacts with Mg(2+). Thiamine diphosphate-binding positions include 152–153, asparagine 182, tyrosine 290, and glutamate 372; that span reads GA. Asparagine 182 is a binding site for Mg(2+).

This sequence belongs to the transketolase family. DXPS subfamily. As to quaternary structure, homodimer. Mg(2+) is required as a cofactor. Requires thiamine diphosphate as cofactor.

The enzyme catalyses D-glyceraldehyde 3-phosphate + pyruvate + H(+) = 1-deoxy-D-xylulose 5-phosphate + CO2. The protein operates within metabolic intermediate biosynthesis; 1-deoxy-D-xylulose 5-phosphate biosynthesis; 1-deoxy-D-xylulose 5-phosphate from D-glyceraldehyde 3-phosphate and pyruvate: step 1/1. In terms of biological role, catalyzes the acyloin condensation reaction between C atoms 2 and 3 of pyruvate and glyceraldehyde 3-phosphate to yield 1-deoxy-D-xylulose-5-phosphate (DXP). The sequence is that of 1-deoxy-D-xylulose-5-phosphate synthase from Stenotrophomonas maltophilia (strain K279a).